Consider the following 294-residue polypeptide: Survival motor neuron protein (294 aa).

Residues 1–12 (MAMSSGGSGGGV) are compositionally biased toward gly residues. The interval 1 to 32 (MAMSSGGSGGGVPEQEDSVLFRRGTGQSDDSD) is disordered. Alanine 2 carries the post-translational modification N-acetylalanine. Serine 4, serine 5, and serine 8 each carry phosphoserine; by PKA. Threonine 25 carries the phosphothreonine modification. The segment at 26–51 (GQSDDSDIWDDTALIKAYDKAVASFK) is interacts with GEMIN2. 2 positions are modified to phosphoserine: serine 28 and serine 31. Lysine 51 participates in a covalent cross-link: Glycyl lysine isopeptide (Lys-Gly) (interchain with G-Cter in SUMO2). The disordered stretch occupies residues 59–88 (ICETSGKPKTTPKRKPAKKNKSQKKNTAAS). Residues 68–82 (TTPKRKPAKKNKSQK) show a composition bias toward basic residues. Threonine 69 is subject to Phosphothreonine. Threonine 85 is modified (phosphothreonine; by PKA). Residues 91–151 (QWKVGDKCSA…LSPICEVANN (61 aa)) form the Tudor domain. Residues 97–209 (KCSAIWSEDG…MPGPRLGPGK (113 aa)) form a required for interaction with RPP20/POP7 region. The segment covering 156 to 166 (AQENENESQVS) has biased composition (low complexity). The tract at residues 156–222 (AQENENESQV…KFNGPPPPPP (67 aa)) is disordered. A Phosphoserine; by PKA modification is found at serine 187. A compositionally biased stretch (pro residues) spans 194–204 (LPPPPPMPGPR). Low complexity predominate over residues 206 to 215 (GPGKPGLKFN). Lysine 209 participates in a covalent cross-link: Glycyl lysine isopeptide (Lys-Gly) (interchain with G-Cter in SUMO2). The tract at residues 240-267 (PPIIPPPPPICPDSLDDADALGSMLISW) is P2 (binding site for SNRPB). An involved in homooligomerization region spans residues 252-280 (DSLDDADALGSMLISWYMSGYHTGYYMGF). The segment at 279–294 (GFRQNQKEGRCSHSLN) is required for interaction with SYNCRIP.

This sequence belongs to the SMN family. In terms of assembly, homooligomer; may form higher order homooligomers in the dimer to octamer range. Part of the core SMN complex that contains SMN1, GEMIN2/SIP1, DDX20/GEMIN3, GEMIN4, GEMIN5, GEMIN6, GEMIN7, GEMIN8 and STRAP/UNRIP. Part of the SMN-Sm complex that contains SMN1, GEMIN2/SIP1, DDX20/GEMIN3, GEMIN4, GEMIN5, GEMIN6, GEMIN7, GEMIN8, STRAP/UNRIP and the Sm proteins SNRPB, SNRPD1, SNRPD2, SNRPD3, SNRPE, SNRPF and SNRPG. Component of an import snRNP complex composed of KPNB1, RNUT1, SMN1 and ZNF259. Interacts with DDX20, FBL, NOLA1, RNUT1, SYNCRIP and with several spliceosomal snRNP core Sm proteins, including SNRPB, SNRPD1, SNRPD2, SNRPD3, SNRPE and ILF3. Interacts with GEMIN2; the interaction is direct. Interacts with GEMIN3; the interaction is direct. Interacts with GEMIN8; the interaction is direct. Interacts with SNRPB; the interaction is direct. Interacts (via Tudor domain) with SNRPD1 (via C-terminus); the interaction is direct. Interacts with SNRPD2; the interaction is direct. Interacts (via Tudor domain) with SNRPD3 (via C-terminus); the interaction is direct. Interacts with SNRPE; the interaction is direct. Interacts with OSTF1, LSM10, LSM11 and RPP20/POP7. Interacts (via C-terminal region) with ZPR1 (via C-terminal region). Interacts (via Tudor domain) with COIL. Interacts with SETX; recruits SETX to POLR2A. Interacts with POLR2A (via the C-terminal domain (CTD)). Interacts with PRMT5. Interacts with XRN2. Interacts (via C-terminus) with FMR1 (via C-terminus); the interaction is direct and occurs in a RNA-independent manner. Interacts (via Tudor domain) with SF3B2 ('Arg-508'-methylated form). Interacts with WRAP53/TCAB1. Interacts (via Tudor domain) with ELAVL4 in an RNA-independent manner; the interaction is required for localization of ELAVL4 to RNA granules. Interacts with FRG1. As to quaternary structure, does not homooligomerize. Does not interact with SNRPB. In terms of tissue distribution, expressed in a wide variety of tissues. Expressed at high levels in brain, kidney and liver, moderate levels in skeletal and cardiac muscle, and low levels in fibroblasts and lymphocytes. Also seen at high levels in spinal cord. Present in osteoclasts and mononuclear cells (at protein level).

The protein resides in the nucleus. Its subcellular location is the gem. It localises to the cajal body. It is found in the cytoplasm. The protein localises to the cytoplasmic granule. The protein resides in the perikaryon. Its subcellular location is the cell projection. It localises to the neuron projection. It is found in the axon. The protein localises to the myofibril. The protein resides in the sarcomere. Its subcellular location is the z line. Functionally, the SMN complex catalyzes the assembly of small nuclear ribonucleoproteins (snRNPs), the building blocks of the spliceosome, and thereby plays an important role in the splicing of cellular pre-mRNAs. Most spliceosomal snRNPs contain a common set of Sm proteins SNRPB, SNRPD1, SNRPD2, SNRPD3, SNRPE, SNRPF and SNRPG that assemble in a heptameric protein ring on the Sm site of the small nuclear RNA to form the core snRNP (Sm core). In the cytosol, the Sm proteins SNRPD1, SNRPD2, SNRPE, SNRPF and SNRPG are trapped in an inactive 6S pICln-Sm complex by the chaperone CLNS1A that controls the assembly of the core snRNP. To assemble core snRNPs, the SMN complex accepts the trapped 5Sm proteins from CLNS1A forming an intermediate. Within the SMN complex, SMN1 acts as a structural backbone and together with GEMIN2 it gathers the Sm complex subunits. Binding of snRNA inside 5Sm ultimately triggers eviction of the SMN complex, thereby allowing binding of SNRPD3 and SNRPB to complete assembly of the core snRNP. Ensures the correct splicing of U12 intron-containing genes that may be important for normal motor and proprioceptive neurons development. Also required for resolving RNA-DNA hybrids created by RNA polymerase II, that form R-loop in transcription terminal regions, an important step in proper transcription termination. May also play a role in the metabolism of small nucleolar ribonucleoprotein (snoRNPs). The protein is Survival motor neuron protein (SMN1) of Homo sapiens (Human).